The following is an 89-amino-acid chain: uncharacterized protein (89 aa).

The tract at residues 66–89 (RIKEQSSSSSATRTTQEPSLHLPD) is disordered.

This is an uncharacterized protein from Cestrum parqui (CmYLCV).